A 429-amino-acid polypeptide reads, in one-letter code: Glutamyl-tRNA reductase (429 aa).

Residues 50-53, serine 110, 115-117, and glutamine 121 contribute to the substrate site; these read TCNR and ETQ. Cysteine 51 serves as the catalytic Nucleophile. 190–195 contacts NADP(+); sequence GAGEMA.

It belongs to the glutamyl-tRNA reductase family. Homodimer.

It catalyses the reaction (S)-4-amino-5-oxopentanoate + tRNA(Glu) + NADP(+) = L-glutamyl-tRNA(Glu) + NADPH + H(+). The protein operates within porphyrin-containing compound metabolism; protoporphyrin-IX biosynthesis; 5-aminolevulinate from L-glutamyl-tRNA(Glu): step 1/2. In terms of biological role, catalyzes the NADPH-dependent reduction of glutamyl-tRNA(Glu) to glutamate 1-semialdehyde (GSA). In Campylobacter hominis (strain ATCC BAA-381 / DSM 21671 / CCUG 45161 / LMG 19568 / NCTC 13146 / CH001A), this protein is Glutamyl-tRNA reductase.